The following is a 486-amino-acid chain: NGFI-A-binding protein 1 (486 aa).

Positions 4–82 (ALPRTLGELQ…RDWVTNPGLF (79 aa)) are NCD1. Residues lysine 126, lysine 129, and lysine 143 each participate in a glycyl lysine isopeptide (Lys-Gly) (interchain with G-Cter in SUMO2) cross-link. Positions 160–187 (WQGHHATESEHSLSPADLGSPASPKESS) are disordered. Residues serine 171 and serine 182 each carry the phosphoserine modification. A Glycyl lysine isopeptide (Lys-Gly) (interchain with G-Cter in SUMO2) cross-link involves residue lysine 211. Residues 220–309 (LLKNNKKLAK…ARQVSREVTY (90 aa)) are NCD2. The interval 306–337 (EVTYKYTYRTTRLKCGERDELSPKRIKIEDGF) is necessary for nuclear localization. Serine 327 is subject to Phosphoserine. A Glycyl lysine isopeptide (Lys-Gly) (interchain with G-Cter in SUMO1); alternate cross-link involves residue lysine 332. Lysine 332 is covalently cross-linked (Glycyl lysine isopeptide (Lys-Gly) (interchain with G-Cter in SUMO2); alternate). Glycyl lysine isopeptide (Lys-Gly) (interchain with G-Cter in SUMO2) cross-links involve residues lysine 354, lysine 368, and lysine 372. Residues 398–438 (RQSSGEQSPDGGLPSDSSDGQGERPLNLRIPSVQNRQPHHF) are disordered. Residues 404–417 (QSPDGGLPSDSSDG) show a composition bias toward low complexity. At serine 405 the chain carries Phosphoserine. Glycyl lysine isopeptide (Lys-Gly) (interchain with G-Cter in SUMO2) cross-links involve residues lysine 453, lysine 464, and lysine 476. Lysine 479 participates in a covalent cross-link: Glycyl lysine isopeptide (Lys-Gly) (interchain with G-Cter in SUMO1); alternate. Residue lysine 479 forms a Glycyl lysine isopeptide (Lys-Gly) (interchain with G-Cter in SUMO2); alternate linkage.

Belongs to the NAB family. In terms of assembly, homomultimers may associate with EGR1 bound to DNA. Widely expressed in adult. In day 16 embryo highest levels in forebrain, thymus, salivary gland and cartilage.

The protein resides in the nucleus. Its function is as follows. Acts as a transcriptional repressor for zinc finger transcription factors EGR1 and EGR2. The chain is NGFI-A-binding protein 1 (Nab1) from Mus musculus (Mouse).